We begin with the raw amino-acid sequence, 308 residues long: tRNA pseudouridine synthase B (308 aa).

D47 (nucleophile) is an active-site residue.

Belongs to the pseudouridine synthase TruB family. Type 1 subfamily.

The catalysed reaction is uridine(55) in tRNA = pseudouridine(55) in tRNA. Functionally, responsible for synthesis of pseudouridine from uracil-55 in the psi GC loop of transfer RNAs. This Xanthomonas oryzae pv. oryzae (strain MAFF 311018) protein is tRNA pseudouridine synthase B.